The chain runs to 507 residues: Sugar transport protein 6 (507 aa).

The Cytoplasmic segment spans residues Met1 to Tyr20. The next 12 helical transmembrane spans lie at Val21–Ile41, Phe78–Ser98, Ile115–Ile135, Leu138–Ile158, Gly165–Val185, Ile199–Ile219, Phe280–Phe300, Leu318–Val338, Phe345–Leu365, Leu381–Leu401, Gly418–Leu438, and Gly447–Ile467. Over Pro468–Ala507 the chain is Cytoplasmic.

The protein belongs to the major facilitator superfamily. Sugar transporter (TC 2.A.1.1) family. As to expression, pollen specific.

Its subcellular location is the membrane. With respect to regulation, inhibited by uncouplers such as 2,4-dinitrophenol and carbonyl cyanide-m-chlorophenyl-hydrazone. Its function is as follows. Mediates an active uptake of hexoses, probably by sugar/hydrogen symport. Can transport glucose, 3-O-methylglucose, mannose, fructose and galactose, and, to a lower extent, xylose and ribulose. The polypeptide is Sugar transport protein 6 (STP6) (Arabidopsis thaliana (Mouse-ear cress)).